The primary structure comprises 211 residues: Thymidylate kinase (211 aa).

10-17 (GVEGCGKT) is an ATP binding site.

This sequence belongs to the thymidylate kinase family.

The enzyme catalyses dTMP + ATP = dTDP + ADP. Phosphorylation of dTMP to form dTDP in both de novo and salvage pathways of dTTP synthesis. This is Thymidylate kinase from Nostoc sp. (strain PCC 7120 / SAG 25.82 / UTEX 2576).